The chain runs to 387 residues: Oleoyl-12-hydroxylase FAH12 (387 aa).

The tract at residues 1–34 (MGGGGRMSTVITSNNSEKKGGSSHLKRAPHTKPP) is disordered. The next 2 helical transmembrane spans lie at 61–81 (AYDV…FPYI) and 88–108 (VAWL…WVIG). Positions 109–113 (HECGH) match the Histidine box-1 motif. Residues 121–141 (LADDIVGLIVHSALLVPYFSW) form a helical membrane-spanning segment. Positions 145–149 (HRRHH) match the Histidine box-2 motif. Helical transmembrane passes span 183-203 (VLTL…FNVS), 229-249 (IYIA…ATMA), and 253-273 (AWVM…LVMI). The short motif at 319-323 (HVAHH) is the Histidine box-3 element.

This sequence belongs to the fatty acid desaturase type 1 family. In terms of tissue distribution, expressed in seeds. Barely detected in leaves.

The protein localises to the microsome membrane. It carries out the reaction a 1-acyl-2-(9Z)-octadecenoyl-sn-glycero-3-phosphocholine + 2 Fe(II)-[cytochrome b5] + O2 + 2 H(+) = a 1-acyl-2-[(R)-12-hydroxyoleoyl]-sn-glycero-3-phosphocholine + 2 Fe(III)-[cytochrome b5] + H2O. It functions in the pathway lipid metabolism; monounsaturated fatty acid biosynthesis. Inhibited by oleoyloxyethyl phosphocholine. Its function is as follows. Oleoyl-12-hydroxylase involved in the biosynthesis of ricinoleate (12-hydroxy-cis-9-octadecenoate), the major fatty acid constituent of the oil seeds from castor bean plants. Catalyzes the hydroxylation at the 12-position of 1-acyl-2-oleoyl-sn-glycero-3-phosphocholine (2-oleoyl-PC), which seems to be the actual physiological subtrate. It uses cytochrome b5 as an electron donor. May also be involved in the production of lesquerolic acid (14-hydroxyeicos-cis-ll-enoic acid) in vitro. The sequence is that of Oleoyl-12-hydroxylase FAH12 from Ricinus communis (Castor bean).